The chain runs to 31 residues: Sarcolipin (31 aa).

Residues 1–7 (MGINTRE) lie on the Cytoplasmic side of the membrane. Residues 8-26 (LFLNFTIVLITVILMWLLV) traverse the membrane as a helical segment. The Lumenal portion of the chain corresponds to 27-31 (RSYQY).

The protein belongs to the sarcolipin family. Homooligomer. Can also form heterooligomers with other sarcoplasmic/endoplasmic reticulum calcium ATPase (SERCA) regulators ARLN, ERLN, PLN and STRIT1/DWORF. Monomer. Interacts with calcium ATPase ATP2A1/SERCA1. Interacts as a monomer with ATP2A2/SERCA2; the interaction decreases ATP2A2 Ca(2+) affinity. Interacts with VMP1; VMP1 competes with PLN and SLN to prevent them from forming an inhibitory complex with ATP2A2.

It localises to the sarcoplasmic reticulum membrane. The protein resides in the endoplasmic reticulum membrane. Reversibly inhibits the activity of ATP2A1/SERCA1 and ATP2A2/SERCA2 in sarcoplasmic reticulum by decreasing the apparent affinity of the ATPase for Ca(2+). Also inhibits the activity of ATP2A3/SERCA3. Modulates calcium re-uptake during muscle relaxation and plays an important role in calcium homeostasis in muscle. Required for muscle-based, non-shivering thermogenesis. The protein is Sarcolipin of Homo sapiens (Human).